Here is a 348-residue protein sequence, read N- to C-terminus: tRNA N6-adenosine threonylcarbamoyltransferase (348 aa).

Residues His111 and His115 each contribute to the Fe cation site. Substrate is bound by residues 134–138 (LISGG), Asp167, Gly180, and Asn277. Residue Asp305 participates in Fe cation binding.

This sequence belongs to the KAE1 / TsaD family. Requires Fe(2+) as cofactor.

The protein resides in the cytoplasm. The catalysed reaction is L-threonylcarbamoyladenylate + adenosine(37) in tRNA = N(6)-L-threonylcarbamoyladenosine(37) in tRNA + AMP + H(+). In terms of biological role, required for the formation of a threonylcarbamoyl group on adenosine at position 37 (t(6)A37) in tRNAs that read codons beginning with adenine. Is involved in the transfer of the threonylcarbamoyl moiety of threonylcarbamoyl-AMP (TC-AMP) to the N6 group of A37, together with TsaE and TsaB. TsaD likely plays a direct catalytic role in this reaction. The sequence is that of tRNA N6-adenosine threonylcarbamoyltransferase from Haemophilus ducreyi (strain 35000HP / ATCC 700724).